The sequence spans 271 residues: Probable iron transport system membrane protein HI_0359 (271 aa).

8 helical membrane-spanning segments follow: residues 17–37, 55–75, 93–113, 131–151, 168–188, 194–214, 221–241, and 245–265; these read ALLT…YLVL, IVLA…SGIF, TAMG…FTKI, SHQE…LIVF, VAGL…ALTI, VVGV…ALTL, MLWV…ILSY, and ASTG…ALAY.

This sequence belongs to the ABC-3 integral membrane protein family.

It is found in the cell inner membrane. Part of an ATP-driven transport system HI_0359/HI_0360/HI_0361/HI_0362 for iron. The chain is Probable iron transport system membrane protein HI_0359 from Haemophilus influenzae (strain ATCC 51907 / DSM 11121 / KW20 / Rd).